The chain runs to 626 residues: L-amino-acid oxidase 4 (626 aa).

The N-terminal stretch at 1-18 (KSFFRSLVAASLVIVSYS) is a signal peptide. N-linked (GlcNAc...) asparagine glycosylation is present at Asn-54. Gly-75, Glu-94, Ala-95, Arg-102, Met-122, and Arg-123 together coordinate FAD. L-glutamate is bound at residue Arg-123. Arg-123 is a binding site for L-glutamine. Arg-123 contacts L-lysine. Position 123 (Arg-123) interacts with L-phenylalanine. 3 N-linked (GlcNAc...) asparagine glycosylation sites follow: Asn-164, Asn-193, and Asn-331. Val-334 provides a ligand contact to FAD. Residue Tyr-457 participates in L-glutamate binding. Tyr-457 contributes to the L-glutamine binding site. Residue Tyr-457 coordinates L-lysine. Position 457 (Tyr-457) interacts with L-phenylalanine. Glu-551 contacts FAD. Residue Ala-558 coordinates L-phenylalanine. FAD-binding residues include Trp-559 and Val-560.

The protein belongs to the flavin monoamine oxidase family. FIG1 subfamily. Homodimer. Requires FAD as cofactor. In terms of processing, out of the 4 glycosylated residues, Asn-54 is hypermannosylated. The presence of a hypermannosylated N-glycan on Asn-54 leads to adoption of a more active conformation in the absence of acid activation.

It is found in the secreted. It catalyses the reaction an L-alpha-amino acid + O2 + H2O = a 2-oxocarboxylate + H2O2 + NH4(+). The enzyme catalyses L-lysine + O2 + H2O = 6-amino-2-oxohexanoate + H2O2 + NH4(+). The catalysed reaction is L-glutamate + O2 + H2O = H2O2 + 2-oxoglutarate + NH4(+). It carries out the reaction L-arginine + O2 + H2O = 5-guanidino-2-oxopentanoate + H2O2 + NH4(+). It catalyses the reaction L-leucine + O2 + H2O = 4-methyl-2-oxopentanoate + H2O2 + NH4(+). The enzyme catalyses L-asparagine + O2 + H2O = 2-oxosuccinamate + H2O2 + NH4(+). The catalysed reaction is L-histidine + O2 + H2O = 3-(imidazol-5-yl)pyruvate + H2O2 + NH4(+). It carries out the reaction L-isoleucine + O2 + H2O = (S)-3-methyl-2-oxopentanoate + H2O2 + NH4(+). It catalyses the reaction L-methionine + O2 + H2O = 4-methylsulfanyl-2-oxobutanoate + H2O2 + NH4(+). The enzyme catalyses L-phenylalanine + O2 + H2O = 3-phenylpyruvate + H2O2 + NH4(+). The catalysed reaction is L-tyrosine + O2 + H2O = 3-(4-hydroxyphenyl)pyruvate + H2O2 + NH4(+). It carries out the reaction L-glutamine + O2 + H2O = 2-oxoglutaramate + H2O2 + NH4(+). It catalyses the reaction L-alanine + O2 + H2O = pyruvate + H2O2 + NH4(+). LAAO4 is activated by exposure to acidic pH, the detergent sodium dodecyl sulfate, or freezing. Catalyzes the oxidative deamination of L-amino acids with molecular oxygen to the corresponding alpha-keto acids and ammonia. L-glutamine shows the highest relative activity but LAAO4 has a broad substrate specificity, including L-amino acids with big aromatic, acidic and basic side chains. Methyl esters of these L-amino acids are also accepted, ethyl esters are converted but with lower activity, whereas D-Amino acids are not converted. No reaction is detected for small polar amino acids such as L-cysteine or L-aspartate, and very little for small, branched hydrophobic amino acids like L-valine. The chain is L-amino-acid oxidase 4 from Hebeloma cylindrosporum.